The sequence spans 1476 residues: ABC transporter G family member 17 (1476 aa).

Disordered regions lie at residues 13–45 and 68–91; these read SENNNNNNNNNNNNNNNNNNNLNNNNDNDYDYD and FREIDGGKNNNNHDIELGERKPEN. The stretch at 14–67 forms a coiled coil; that stretch reads ENNNNNNNNNNNNNNNNNNNLNNNNDNDYDYDSINNIEEKFENVSKELEGQSIK. Low complexity predominate over residues 15–39; it reads NNNNNNNNNNNNNNNNNNNLNNNND. In terms of domain architecture, ABC transporter 1 spans 151–402; the sequence is LNPFNYFKKD…FLDLGFDCEP (252 aa). Positions 507–751 constitute an ABC transmembrane type-2 1 domain; sequence WGDKFTLTSR…SLSVKGENYL (245 aa). 5 helical membrane passes run 517-537, 547-567, 592-612, 623-643, and 764-784; these read FLTILVLSFIFGGIYFQQPLT, AIFTSIIFNCILTQGELHGAL, ILIDIPFILVQVFLHSFIVYF, FFIFCFTLVGVSLSSASLFRG, and LNVVVIFLFWLFYIGLNLFAV. An ABC transporter 2 domain is found at 838–1082; that stretch reads FSWKSISYTV…LTSYFERHGV (245 aa). 874–881 provides a ligand contact to ATP; that stretch reads GSSGAGKT. The next 6 membrane-spanning stretches (helical) occupy residues 1182–1202, 1219–1239, 1260–1280, 1298–1318, 1322–1342, and 1450–1470; these read FYTMGSFAQSAVSGLVIGFTF, SWEAMILGVLLIYLVLPMFFI, LSMIAVEIPYVVLSSTLFFIA, WLMHTMFSVYIVSFAQALGAA, IAISIAALPIVLFYLFLLCGV, and FGIIVAYWGSSILAVLFFVYL. The ABC transmembrane type-2 2 domain occupies 1182-1405; the sequence is FYTMGSFAQS…TDCQTYSAPF (224 aa).

This sequence belongs to the ABC transporter superfamily. ABCG family. PDR (TC 3.A.1.205) subfamily.

Its subcellular location is the membrane. The protein is ABC transporter G family member 17 (abcG17-1) of Dictyostelium discoideum (Social amoeba).